Here is a 147-residue protein sequence, read N- to C-terminus: MRTTYMAKPGQVDRKWYVVDAKGISLGRLASTVASILRGKNKPTFTPHVDTGDYVIVINAAEVKLTGKKATGKIYYRHSNHPGGLKQRTAGDFLAKDPEKMVEQTIKGMLPHTSLGRKMGMKLHVYAGESHNQAAQKPEVLDITNLI.

It belongs to the universal ribosomal protein uL13 family. Part of the 50S ribosomal subunit.

Its function is as follows. This protein is one of the early assembly proteins of the 50S ribosomal subunit, although it is not seen to bind rRNA by itself. It is important during the early stages of 50S assembly. The protein is Large ribosomal subunit protein uL13 of Limosilactobacillus fermentum (strain NBRC 3956 / LMG 18251) (Lactobacillus fermentum).